A 244-amino-acid polypeptide reads, in one-letter code: Putative quercetin 2,3-dioxygenase Mb0187c (244 aa).

A divalent metal cation contacts are provided by His60, His62, His104, and Glu106.

It belongs to the pirin family. The cofactor is a divalent metal cation.

The enzyme catalyses quercetin + O2 = 2-(3,4-dihydroxybenzoyloxy)-4,6-dihydroxybenzoate + CO. The protein operates within flavonoid metabolism; quercetin degradation. Functionally, putative quercetin 2,3-dioxygenase. In Mycobacterium bovis (strain ATCC BAA-935 / AF2122/97), this protein is Putative quercetin 2,3-dioxygenase Mb0187c.